The following is a 321-amino-acid chain: Malate dehydrogenase (321 aa).

NAD(+)-binding positions include 13 to 18 and Asp-38; that span reads GAGNIG. Substrate-binding residues include Arg-87 and Arg-93. NAD(+) contacts are provided by residues Asn-100 and 123–125; that span reads VTN. The substrate site is built by Asn-125 and Arg-156. His-180 serves as the catalytic Proton acceptor.

It belongs to the LDH/MDH superfamily. MDH type 3 family.

The catalysed reaction is (S)-malate + NAD(+) = oxaloacetate + NADH + H(+). Its function is as follows. Catalyzes the reversible oxidation of malate to oxaloacetate. The chain is Malate dehydrogenase from Anaplasma phagocytophilum (strain HZ).